A 363-amino-acid polypeptide reads, in one-letter code: Fructose-bisphosphate aldolase 1 (363 aa).

Aspartate 34 lines the dihydroxyacetone phosphate pocket. The D-glyceraldehyde 3-phosphate site is built by serine 36 and threonine 39. Arginine 43 is a binding site for beta-D-fructose 1,6-bisphosphate. Lysine 107 lines the D-glyceraldehyde 3-phosphate pocket. Lysine 146 is a binding site for dihydroxyacetone phosphate. Glutamate 189 is a D-glyceraldehyde 3-phosphate binding site. Catalysis depends on glutamate 189, which acts as the Proton acceptor. Lysine 231, serine 273, and glycine 274 together coordinate dihydroxyacetone phosphate. The Schiff-base intermediate with dihydroxyacetone phosphate role is filled by lysine 231. Beta-D-fructose 1,6-bisphosphate is bound by residues 273-275 and serine 301; that span reads SGG. 2 residues coordinate dihydroxyacetone phosphate: glycine 303 and arginine 304. Arginine 304 contacts beta-D-fructose 1,6-bisphosphate.

This sequence belongs to the class I fructose-bisphosphate aldolase family. As to quaternary structure, homotetramer. Component of a complex, at least composed of ald-1, microneme protein MIC2 and ACT1. Interacts with microneme protein MIC2 (via cytoplasmic tail). Interacts with ACT1 (F-actin).

Its subcellular location is the cytoplasm. The enzyme catalyses beta-D-fructose 1,6-bisphosphate = D-glyceraldehyde 3-phosphate + dihydroxyacetone phosphate. Its pathway is carbohydrate degradation; glycolysis; D-glyceraldehyde 3-phosphate and glycerone phosphate from D-glucose: step 4/4. Its function is as follows. Plays a key role in glycolysis by catalyzing the cleavage of fructose 1,6-bisphosphate into dihydroxyacetone phosphate and glyceraldehyde 3-phosphate. Forms a bridge between cell surface adhesins and the actin cytoskeleton. Required for parasite invasion of host cells. This chain is Fructose-bisphosphate aldolase 1, found in Toxoplasma gondii.